The chain runs to 614 residues: Vitamin B12 transporter BtuB (614 aa).

The signal sequence occupies residues 1–20 (MIKKATLLTAFSVTAFSAWA). A TonB box motif is present at residues 26–33 (DTLVVTAN). Residues 38–152 (PRSAVLAPVT…IGGVVNIITT (115 aa)) form the TBDR plug domain. Cyanocob(III)alamin is bound by residues serine 85, asparagine 92, and 110–111 (VS). The TBDR beta-barrel domain maps to 155-614 (NPGTELTAGW…EYTLSGSYTF (460 aa)). The next 3 membrane-spanning stretches (beta stranded) occupy residues 158-165 (TELTAGWG), 169-178 (YQNYDISTQQ), and 184-195 (TRATLIGDYEYT). Aspartate 199, glutamine 211, aspartate 213, and aspartate 215 together coordinate Ca(2+). Beta stranded transmembrane passes span 217 to 227 (FLSKTLYGALE) and 232 to 248 (DRWS…NRTD). Positions 249 and 250 each coordinate Ca(2+). Alanine 251 contacts cyanocob(III)alamin. Position 261 (aspartate 261) interacts with Ca(2+). The next 14 beta stranded transmembrane spans lie at 263–277 (RKLY…LRFN), 279–296 (ERIQ…KDYN), 309–325 (TLDE…NSVV), 328–337 (HGNVGAGVDW), 353–369 (YDQR…QQLG), 371–381 (FTLEAAARSDD), 385–400 (FGRH…WEFI), 403–417 (YRFI…KAPN), 434–443 (KSKQWEGAFE), 449–458 (VSWRISGYRN), 473–490 (YYNE…TANF), 494–509 (PLTH…ARNA), 517–529 (RRSK…QLDW), and 535–550 (DWGV…YDSD). Threonine 309 provides a ligand contact to cyanocob(III)alamin. Arginine 517 lines the cyanocob(III)alamin pocket. Residue tyrosine 551 participates in cyanocob(III)alamin binding. Transmembrane regions (beta stranded) follow at residues 558 to 572 (TVKM…LTVA), 585 to 596 (IANLFDKDYETV), and 602 to 614 (AGRE…SYTF). The TonB C-terminal box signature appears at 597 to 614 (YGYQTAGREYTLSGSYTF).

This sequence belongs to the TonB-dependent receptor family. BtuB (TC 1.B.14.3.1) subfamily.

It is found in the cell outer membrane. Involved in the active translocation of vitamin B12 (cyanocobalamin) across the outer membrane to the periplasmic space. It derives its energy for transport by interacting with the trans-periplasmic membrane protein TonB. In Salmonella choleraesuis (strain SC-B67), this protein is Vitamin B12 transporter BtuB.